Reading from the N-terminus, the 348-residue chain is Holliday junction branch migration complex subunit RuvB (348 aa).

Residues 4-184 are large ATPase domain (RuvB-L); sequence TDRLIAASGR…FGIVQRLEFY (181 aa). ATP is bound by residues I23, R24, G65, K68, T69, T70, 131-133, R174, Y184, and R221; that span reads EDF. T69 is a binding site for Mg(2+). The interval 185–255 is small ATPAse domain (RuvB-S); that stretch reads SNKDLATIVS…VADMALNLLD (71 aa). The head domain (RuvB-H) stretch occupies residues 258-348; sequence ERGFDHSDRR…GGEYAAQDDE (91 aa). Residues R294, R313, and R318 each coordinate DNA.

The protein belongs to the RuvB family. Homohexamer. Forms an RuvA(8)-RuvB(12)-Holliday junction (HJ) complex. HJ DNA is sandwiched between 2 RuvA tetramers; dsDNA enters through RuvA and exits via RuvB. An RuvB hexamer assembles on each DNA strand where it exits the tetramer. Each RuvB hexamer is contacted by two RuvA subunits (via domain III) on 2 adjacent RuvB subunits; this complex drives branch migration. In the full resolvosome a probable DNA-RuvA(4)-RuvB(12)-RuvC(2) complex forms which resolves the HJ.

The protein resides in the cytoplasm. The catalysed reaction is ATP + H2O = ADP + phosphate + H(+). Functionally, the RuvA-RuvB-RuvC complex processes Holliday junction (HJ) DNA during genetic recombination and DNA repair, while the RuvA-RuvB complex plays an important role in the rescue of blocked DNA replication forks via replication fork reversal (RFR). RuvA specifically binds to HJ cruciform DNA, conferring on it an open structure. The RuvB hexamer acts as an ATP-dependent pump, pulling dsDNA into and through the RuvAB complex. RuvB forms 2 homohexamers on either side of HJ DNA bound by 1 or 2 RuvA tetramers; 4 subunits per hexamer contact DNA at a time. Coordinated motions by a converter formed by DNA-disengaged RuvB subunits stimulates ATP hydrolysis and nucleotide exchange. Immobilization of the converter enables RuvB to convert the ATP-contained energy into a lever motion, pulling 2 nucleotides of DNA out of the RuvA tetramer per ATP hydrolyzed, thus driving DNA branch migration. The RuvB motors rotate together with the DNA substrate, which together with the progressing nucleotide cycle form the mechanistic basis for DNA recombination by continuous HJ branch migration. Branch migration allows RuvC to scan DNA until it finds its consensus sequence, where it cleaves and resolves cruciform DNA. The protein is Holliday junction branch migration complex subunit RuvB of Pseudomonas entomophila (strain L48).